The following is a 217-amino-acid chain: Ufm1-specific protease 1 (217 aa).

Catalysis depends on residues Cys53, Asp175, and His177.

Belongs to the peptidase C78 family. As to expression, widely expressed. Expressed at higher level in brain, heart, kidney and skeletal muscle.

Its subcellular location is the cytoplasm. The protein resides in the cytosol. Its function is as follows. Thiol-dependent isopeptidase that specifically mediate the processing of UFM1 precursors as well as the deconjugation of UFM1 from target proteins. Mainly responsible for the maturation of the UFM1 precursor, a prerequisite for conjugation reactions. The chain is Ufm1-specific protease 1 from Mus musculus (Mouse).